A 545-amino-acid polypeptide reads, in one-letter code: Pectinesterase/pectinesterase inhibitor (545 aa).

The first 37 residues, 1-37 (MEINQPNLLEASKSCYSKITFFLLVISFAALVSTGFS), serve as a signal peptide directing secretion. The interval 38–191 (SPELSLHHKI…ILRARTSLAI (154 aa)) is pectinesterase inhibitor. Positions 38-228 (SPELSLHHKI…RRLLQTLGKD (191 aa)) are excised as a propeptide. N-linked (GlcNAc...) asparagine glycosylation occurs at Asn135. Positions 232–530 (DIVVAKDGSG…TVAELIQGGS (299 aa)) are pectinesterase. The substrate site is built by Thr307 and Gln337. A disulfide bond links Cys326 and Cys353. Catalysis depends on Asp360, which acts as the Proton donor; for pectinesterase activity. N-linked (GlcNAc...) (complex) asparagine glycosylation is present at Asn375. Asp381 serves as the catalytic Nucleophile; for pectinesterase activity. A disulfide bridge connects residues Cys394 and Cys428. Residues Arg449 and Trp451 each contribute to the substrate site.

It in the N-terminal section; belongs to the PMEI family. This sequence in the C-terminal section; belongs to the pectinesterase family. N-glycosylated.

The protein localises to the secreted. It is found in the cell wall. It carries out the reaction [(1-&gt;4)-alpha-D-galacturonosyl methyl ester](n) + n H2O = [(1-&gt;4)-alpha-D-galacturonosyl](n) + n methanol + n H(+). The protein operates within glycan metabolism; pectin degradation; 2-dehydro-3-deoxy-D-gluconate from pectin: step 1/5. Acts in the modification of cell walls via demethylesterification of cell wall pectin. The chain is Pectinesterase/pectinesterase inhibitor from Ficus pumila var. awkeotsang (Jelly fig).